A 1226-amino-acid polypeptide reads, in one-letter code: Chitin synthase IV (1226 aa).

Residues 1–205 are disordered; that stretch reads MSLPERPGGS…SRKNPATAEQ (205 aa). Residues 49–65 are compositionally biased toward polar residues; it reads SVSSYAETISNPHANTE. The span at 66-75 shows a compositional bias: low complexity; that stretch reads TLPLSPTHPT. The span at 94–107 shows a compositional bias: basic and acidic residues; the sequence is IRPERNRIDKDHRN. The span at 134-151 shows a compositional bias: polar residues; it reads DVSTEPSGGSQTHGSFAD. Positions 163 to 172 are enriched in basic and acidic residues; the sequence is MSGDDQEKGN. Over residues 173 to 198 the composition is skewed to basic residues; it reads TRVKSRPRRSKSGKITKETRHRKSRK. A helical membrane pass occupies residues 246–266; the sequence is MGLISIILVIMAIVGFLTFGF. N-linked (GlcNAc...) asparagine glycosylation is found at N381, N421, and N443. The chain crosses the membrane as a helical span at residues 516–536; it reads ILILSVVGTRFVLALIFQWFI. Positions 572–671 are disordered; the sequence is LPGDVGSSAM…PGPAGFIHDS (100 aa). 2 stretches are compositionally biased toward polar residues: residues 580-601 and 618-643; these read AMGS…TSRF and TTMS…NDSR. The N-linked (GlcNAc...) asparagine glycan is linked to N640. Residues 649-666 show a composition bias toward low complexity; sequence PDPYSSAASPSDGPGPAG. N787 and N1035 each carry an N-linked (GlcNAc...) asparagine glycan. Transmembrane regions (helical) follow at residues 1060–1080, 1094–1114, and 1118–1138; these read FVVF…AFTF, IIPL…ILVT, and WSYV…NFVL.

This sequence belongs to the chitin synthase family. Class IV subfamily. As to expression, highly expressed in conidia.

It is found in the cell membrane. The enzyme catalyses [(1-&gt;4)-N-acetyl-beta-D-glucosaminyl](n) + UDP-N-acetyl-alpha-D-glucosamine = [(1-&gt;4)-N-acetyl-beta-D-glucosaminyl](n+1) + UDP + H(+). Functionally, polymerizes chitin, a structural polymer of the cell wall and septum, by transferring the sugar moiety of UDP-GlcNAc to the non-reducing end of the growing chitin polymer. Contributes to the production of conidia and the ability of fungal conidia to germinate. Involved in fungal stress tolerances. This Metarhizium acridum (strain CQMa 102) protein is Chitin synthase IV.